The primary structure comprises 305 residues: Catechol 1,2-dioxygenase (305 aa).

The Fe cation site is built by Tyr163, Tyr197, His221, and His223.

It belongs to the intradiol ring-cleavage dioxygenase family. In terms of assembly, homodimer. Fe(3+) is required as a cofactor.

It carries out the reaction catechol + O2 = cis,cis-muconate + 2 H(+). It participates in aromatic compound metabolism; beta-ketoadipate pathway; 5-oxo-4,5-dihydro-2-furylacetate from catechol: step 1/3. The polypeptide is Catechol 1,2-dioxygenase (catA) (Acinetobacter guillouiae (Acinetobacter genomosp. 11)).